The following is a 191-amino-acid chain: Small ribosomal subunit protein uS5 (191 aa).

The interval 1–21 (MAAERERGGRERSREREERDS) is disordered. The region spanning 23-86 (FVDKLVHINR…ESAKRNLTRV (64 aa)) is the S5 DRBM domain.

As to quaternary structure, part of the 30S ribosomal subunit. Contacts proteins S4 and S8.

Functionally, with S4 and S12 plays an important role in translational accuracy. Located at the back of the 30S subunit body where it stabilizes the conformation of the head with respect to the body. This Rhodopseudomonas palustris (strain ATCC BAA-98 / CGA009) protein is Small ribosomal subunit protein uS5.